A 152-amino-acid chain; its full sequence is MSEKYVVTWDMLQIHARKLASRLLPADQWKGIIAVSRGGLVPAGILARELGIRYVDTVCIASYNHDNQGELKVLKRAEGDGEGFIVIDDLVDTGGTAKAIREMYPKAHFVTIFAKPAGRPLVDDYEVDIPQGTWIEQPWDMAVTFVAPLSAK.

Residues 37 to 38 and 88 to 96 contribute to the 5-phospho-alpha-D-ribose 1-diphosphate site; these read RG and DDLVDTGGT. Mg(2+) is bound at residue Asp89. 2 residues coordinate guanine: Asp92 and Ile135. Asp92 and Ile135 together coordinate xanthine. Residues 92-96 and 134-135 each bind GMP; these read DTGGT and WI.

This sequence belongs to the purine/pyrimidine phosphoribosyltransferase family. XGPT subfamily. In terms of assembly, homotetramer. The cofactor is Mg(2+).

The protein resides in the cell inner membrane. The enzyme catalyses GMP + diphosphate = guanine + 5-phospho-alpha-D-ribose 1-diphosphate. It catalyses the reaction XMP + diphosphate = xanthine + 5-phospho-alpha-D-ribose 1-diphosphate. It carries out the reaction IMP + diphosphate = hypoxanthine + 5-phospho-alpha-D-ribose 1-diphosphate. The protein operates within purine metabolism; GMP biosynthesis via salvage pathway; GMP from guanine: step 1/1. It participates in purine metabolism; XMP biosynthesis via salvage pathway; XMP from xanthine: step 1/1. Purine salvage pathway enzyme that catalyzes the transfer of the ribosyl-5-phosphate group from 5-phospho-alpha-D-ribose 1-diphosphate (PRPP) to the N9 position of the 6-oxopurines guanine and xanthine to form the corresponding ribonucleotides GMP (guanosine 5'-monophosphate) and XMP (xanthosine 5'-monophosphate), with the release of PPi. To a lesser extent, also acts on hypoxanthine. The protein is Xanthine-guanine phosphoribosyltransferase of Yersinia enterocolitica serotype O:8 / biotype 1B (strain NCTC 13174 / 8081).